Here is a 239-residue protein sequence, read N- to C-terminus: Probable transcriptional regulatory protein EF_2866 (239 aa).

The protein belongs to the TACO1 family. YeeN subfamily.

The protein localises to the cytoplasm. The sequence is that of Probable transcriptional regulatory protein EF_2866 from Enterococcus faecalis (strain ATCC 700802 / V583).